Consider the following 76-residue polypeptide: Nemertide alpha-1 (76 aa).

Residues 1 to 28 (YRIASSSIAKMKTAVFLVGLLFLGLVFA) form the signal peptide. The propeptide occupies 29–44 (DEAAIDSEFDQSIDKR). 3 cysteine pairs are disulfide-bonded: Cys-46–Cys-60, Cys-53–Cys-64, and Cys-59–Cys-70. 2 positions are modified to 4-hydroxyproline: Pro-72 and Pro-73.

The protein belongs to the nemertide family. As to expression, confined to the epidermis and to the mucus layer.

The protein localises to the secreted. Highly potent toxin against insect sodium channel (Nav) and with less potent activity against mammalian sodium channels. Potently inhibits inactivation of insect sodium channels of B.germanica (BgNav1) (EC(50)=8.6 nM), D.melanogaster (Dm Nav1), and arachnid sodium channel V.destructor (VdNav1). Also delays the inactivation of most mammalian Nav channels tested (human Nav1.1/SCN1A; EC(50)=124.1 nM, rat Nav1.2/SCN2A; EC(50)=359.6 nM, rat Nav1.3/SCN3A; EC(50)=135.4 nM, rat Nav1.4/SCN4A; EC(50)=145.5 nM, human Nav1.5/SCN5A; EC(50)=138.3 nM, mouse Nav1.6/SCN8A; EC(50)=240.4 nM, human Nav1.9/SCN9A; EC(50)=76.5 nM). 1 uM is enough to completely inhibits the inactivation, resulting in sustained non-inactivating currents. In addition, the toxin significantly enhances the recovery from inactivation, and the open state is not required for the toxin to interact with the channel. In vivo, injection into green crabs (Carcinus maenas at 1 mug/kg) of small doses (1-5 ug/kg) results in slow and fast permanent paralysis, whereas injection of high doses (more than 10 ug/kg) causes death. Injection into juvenile Blaptica dubia cockroaches results in death or permanent paralysis at doses higher than 7.1 ug/kg. Injection into brine shrimp (Artemia salina) stops movement or causes death after 24 hours (EC(50)=0.3 uM). In the rare inherited cardiac arrhythmia Brugada syndrome 1 (BRGDA1), this toxin is able to restore the loss of function by reducing channel inactivation, without affecting activation, by binding to Nav1.5/SCN5A. This is Nemertide alpha-1 from Lineus lacteus (Ribbon worm).